A 790-amino-acid chain; its full sequence is Probable copper-transporting ATPase SynA (790 aa).

Over 1-105 the chain is Cytoplasmic; the sequence is MPAAIVHSAD…IPPLQQQRLQ (105 aa). In terms of domain architecture, HMA spans 14–81; it reads TSILVEVEGM…EITGLGFRAQ (68 aa). Cysteine 25 and cysteine 28 together coordinate Cu(+). Residues 106–127 form a helical membrane-spanning segment; it reads LAIAAFLLIVSSWGHLGHWLDH. Residues 128–136 lie on the Extracellular side of the membrane; the sequence is PLPGTDQLW. The helical transmembrane segment at 137–156 threads the bilayer; sequence FHALLATWALLGPGRSILQA. Residues 157 to 163 lie on the Cytoplasmic side of the membrane; sequence GWQGLRC. Residues 164–184 traverse the membrane as a helical segment; the sequence is GAPNMNSLVLLGTGSAYLASL. Over 185-198 the chain is Extracellular; sequence VALLWPQLGWVCFF. Residues 199–219 form a helical membrane-spanning segment; sequence DEPVMLLGFILLGRTLEEQAR. The Cytoplasmic portion of the chain corresponds to 220–358; it reads FRSQAALQNL…KAPVQRFADA (139 aa). Residues 359–381 traverse the membrane as a helical segment; sequence IAGRFVYGVCAIAALTFGFWATL. Topologically, residues 382–420 are extracellular; the sequence is GSRWWPQVLQQPLPGLLIHAPHHGMEMAHPHSHSPLLLA. Residues 421 to 438 traverse the membrane as a helical segment; sequence LTLAISVLVVACPCALGL. Residues 439-723 lie on the Cytoplasmic side of the membrane; it reads ATPTAILVAT…NLSQMGLRTI (285 aa). Catalysis depends on aspartate 476, which acts as the 4-aspartylphosphate intermediate. Mg(2+)-binding residues include aspartate 669 and aspartate 673. A helical membrane pass occupies residues 724-743; the sequence is RQNLTWALGYNVVMLPLAAG. At 744–755 the chain is on the extracellular side; it reads AFLPAYGLALTP. Residues 756-774 traverse the membrane as a helical segment; it reads AIAGACMAVSSLAVVSNSL. The Cytoplasmic portion of the chain corresponds to 775 to 790; the sequence is LLRYWFRRSLNHSVSV.

It belongs to the cation transport ATPase (P-type) (TC 3.A.3) family. Type IB subfamily.

Its subcellular location is the cell membrane. The catalysed reaction is Cu(+)(in) + ATP + H2O = Cu(+)(out) + ADP + phosphate + H(+). Its function is as follows. Involved in copper transport. The sequence is that of Probable copper-transporting ATPase SynA (synA) from Synechococcus elongatus (strain ATCC 33912 / PCC 7942 / FACHB-805) (Anacystis nidulans R2).